The sequence spans 265 residues: 5'-nucleotidase SurE (265 aa).

Residues D8, D9, S41, and N100 each coordinate a divalent metal cation.

Belongs to the SurE nucleotidase family. A divalent metal cation serves as cofactor.

The protein resides in the cytoplasm. The enzyme catalyses a ribonucleoside 5'-phosphate + H2O = a ribonucleoside + phosphate. Nucleotidase that shows phosphatase activity on nucleoside 5'-monophosphates. In Brevibacillus brevis (strain 47 / JCM 6285 / NBRC 100599), this protein is 5'-nucleotidase SurE.